The sequence spans 387 residues: Glutamyl-tRNA reductase 1 (387 aa).

Substrate-binding positions include 45–48, Ser-96, 101–103, and Gln-107; these read TCNR and ETD. Cys-46 functions as the Nucleophile in the catalytic mechanism. Residue 175 to 180 coordinates NADP(+); that stretch reads GAGSVG.

It belongs to the glutamyl-tRNA reductase family. In terms of assembly, homodimer.

It carries out the reaction (S)-4-amino-5-oxopentanoate + tRNA(Glu) + NADP(+) = L-glutamyl-tRNA(Glu) + NADPH + H(+). The protein operates within porphyrin-containing compound metabolism; protoporphyrin-IX biosynthesis; 5-aminolevulinate from L-glutamyl-tRNA(Glu): step 1/2. Functionally, catalyzes the NADPH-dependent reduction of glutamyl-tRNA(Glu) to glutamate 1-semialdehyde (GSA). This chain is Glutamyl-tRNA reductase 1, found in Pyrobaculum arsenaticum (strain DSM 13514 / JCM 11321 / PZ6).